The sequence spans 178 residues: Photosystem I assembly protein Ycf4 (178 aa).

2 helical membrane-spanning segments follow: residues 19–39 and 61–81; these read ILVALMVTIGGIGFLFASLSS and LIMGLYSLAAALLASYLWAVI.

Belongs to the Ycf4 family.

It localises to the cellular thylakoid membrane. In terms of biological role, seems to be required for the assembly of the photosystem I complex. The sequence is that of Photosystem I assembly protein Ycf4 from Synechococcus sp. (strain CC9311).